The sequence spans 167 residues: NAD(P)H-quinone oxidoreductase subunit J (167 aa).

It belongs to the complex I 30 kDa subunit family. In terms of assembly, NDH-1 can be composed of about 15 different subunits; different subcomplexes with different compositions have been identified which probably have different functions.

The protein resides in the cellular thylakoid membrane. The enzyme catalyses a plastoquinone + NADH + (n+1) H(+)(in) = a plastoquinol + NAD(+) + n H(+)(out). It carries out the reaction a plastoquinone + NADPH + (n+1) H(+)(in) = a plastoquinol + NADP(+) + n H(+)(out). NDH-1 shuttles electrons from an unknown electron donor, via FMN and iron-sulfur (Fe-S) centers, to quinones in the respiratory and/or the photosynthetic chain. The immediate electron acceptor for the enzyme in this species is believed to be plastoquinone. Couples the redox reaction to proton translocation, and thus conserves the redox energy in a proton gradient. Cyanobacterial NDH-1 also plays a role in inorganic carbon-concentration. This is NAD(P)H-quinone oxidoreductase subunit J from Trichodesmium erythraeum (strain IMS101).